Reading from the N-terminus, the 292-residue chain is Lipoyl synthase (292 aa).

[4Fe-4S] cluster-binding residues include Cys-38, Cys-43, Cys-49, Cys-64, Cys-68, Cys-71, and Ser-277. The Radical SAM core domain maps to 50 to 266 (WSKGTATFLL…REIALDAGFR (217 aa)).

The protein belongs to the radical SAM superfamily. Lipoyl synthase family. Requires [4Fe-4S] cluster as cofactor.

Its subcellular location is the cytoplasm. It carries out the reaction [[Fe-S] cluster scaffold protein carrying a second [4Fe-4S](2+) cluster] + N(6)-octanoyl-L-lysyl-[protein] + 2 oxidized [2Fe-2S]-[ferredoxin] + 2 S-adenosyl-L-methionine + 4 H(+) = [[Fe-S] cluster scaffold protein] + N(6)-[(R)-dihydrolipoyl]-L-lysyl-[protein] + 4 Fe(3+) + 2 hydrogen sulfide + 2 5'-deoxyadenosine + 2 L-methionine + 2 reduced [2Fe-2S]-[ferredoxin]. It functions in the pathway protein modification; protein lipoylation via endogenous pathway; protein N(6)-(lipoyl)lysine from octanoyl-[acyl-carrier-protein]: step 2/2. In terms of biological role, catalyzes the radical-mediated insertion of two sulfur atoms into the C-6 and C-8 positions of the octanoyl moiety bound to the lipoyl domains of lipoate-dependent enzymes, thereby converting the octanoylated domains into lipoylated derivatives. The protein is Lipoyl synthase of Chlorobaculum parvum (strain DSM 263 / NCIMB 8327) (Chlorobium vibrioforme subsp. thiosulfatophilum).